The following is a 424-amino-acid chain: Splicing factor 3B subunit 4 (424 aa).

Alanine 2 carries the post-translational modification N-acetylalanine. 2 RRM domains span residues 13-91 (ATVY…KASA) and 100-179 (ANIF…YAFK). Residue tyrosine 56 is modified to Phosphotyrosine. The interval 207–424 (PHQLFADAPP…RGPLRGPLPQ (218 aa)) is disordered. Low complexity predominate over residues 222–231 (NPVVSSLGSG). Positions 232 to 268 (LPPPGMPPPGSFPPPVPPPGALPPGIPPAMPPPPMPP) are enriched in pro residues. Low complexity-rich tracts occupy residues 269–280 (GAAGHGPPSAGT) and 303–323 (HPGMSQMQLAHHGPHGLGHPH). Pro residues-rich tracts occupy residues 332–381 (QPPP…PLMP) and 388–424 (PPRPPPYGYQRGPLPPPRPTPRPPVPPRGPLRGPLPQ).

Belongs to the SF3B4 family. Component of the 17S U2 SnRNP complex, a ribonucleoprotein complex that contains small nuclear RNA (snRNA) U2 and a number of specific proteins. Part of the SF3B subcomplex of the 17S U2 SnRNP complex. SF3B associates with the splicing subcomplex SF3A and a 12S RNA unit to form the U2 small nuclear ribonucleoproteins complex (U2 snRNP). SF3B4 has been found in complex spliceosome 'B' and 'C' as well. Component of the minor (U12-type spliceosome) spliceosome. Found in a complex with PRMT9, SF3B2 and SF3B4.

It is found in the nucleus. Its function is as follows. Component of the 17S U2 SnRNP complex of the spliceosome, a large ribonucleoprotein complex that removes introns from transcribed pre-mRNAs. The 17S U2 SnRNP complex (1) directly participates in early spliceosome assembly and (2) mediates recognition of the intron branch site during pre-mRNA splicing by promoting the selection of the pre-mRNA branch-site adenosine, the nucleophile for the first step of splicing. Within the 17S U2 SnRNP complex, SF3B4 is part of the SF3B subcomplex, which is required for 'A' complex assembly formed by the stable binding of U2 snRNP to the branchpoint sequence in pre-mRNA. Sequence independent binding of SF3A and SF3B subcomplexes upstream of the branch site is essential, it may anchor U2 snRNP to the pre-mRNA. May also be involved in the assembly of the 'E' complex. Also acts as a component of the minor spliceosome, which is involved in the splicing of U12-type introns in pre-mRNAs. The chain is Splicing factor 3B subunit 4 (SF3B4) from Homo sapiens (Human).